We begin with the raw amino-acid sequence, 137 residues long: Ribosome-binding factor A (137 aa).

This sequence belongs to the RbfA family. As to quaternary structure, monomer. Binds 30S ribosomal subunits, but not 50S ribosomal subunits or 70S ribosomes.

It is found in the cytoplasm. In terms of biological role, one of several proteins that assist in the late maturation steps of the functional core of the 30S ribosomal subunit. Associates with free 30S ribosomal subunits (but not with 30S subunits that are part of 70S ribosomes or polysomes). Required for efficient processing of 16S rRNA. May interact with the 5'-terminal helix region of 16S rRNA. The protein is Ribosome-binding factor A of Synechococcus sp. (strain ATCC 27144 / PCC 6301 / SAUG 1402/1) (Anacystis nidulans).